A 429-amino-acid polypeptide reads, in one-letter code: Asparagine--tRNA ligase (429 aa).

It belongs to the class-II aminoacyl-tRNA synthetase family. As to quaternary structure, homodimer.

The protein resides in the cytoplasm. It carries out the reaction tRNA(Asn) + L-asparagine + ATP = L-asparaginyl-tRNA(Asn) + AMP + diphosphate + H(+). This is Asparagine--tRNA ligase from Desulforamulus reducens (strain ATCC BAA-1160 / DSM 100696 / MI-1) (Desulfotomaculum reducens).